The sequence spans 495 residues: Glycerol kinase (495 aa).

Residue threonine 11 participates in ADP binding. Positions 11, 12, and 13 each coordinate ATP. Threonine 11 lines the sn-glycerol 3-phosphate pocket. Residues arginine 81, glutamate 82, tyrosine 133, and aspartate 242 each coordinate sn-glycerol 3-phosphate. Residues arginine 81, glutamate 82, tyrosine 133, aspartate 242, and glutamine 243 each coordinate glycerol. 4 residues coordinate ADP: threonine 264, glycine 307, glycine 407, and asparagine 411. Positions 264, 307, and 407 each coordinate ATP.

Belongs to the FGGY kinase family.

The catalysed reaction is glycerol + ATP = sn-glycerol 3-phosphate + ADP + H(+). The protein operates within polyol metabolism; glycerol degradation via glycerol kinase pathway; sn-glycerol 3-phosphate from glycerol: step 1/1. Inhibited by fructose 1,6-bisphosphate (FBP). In terms of biological role, key enzyme in the regulation of glycerol uptake and metabolism. Catalyzes the phosphorylation of glycerol to yield sn-glycerol 3-phosphate. In Thermus brockianus, this protein is Glycerol kinase.